A 91-amino-acid chain; its full sequence is Small integral membrane protein 12-A (91 aa).

A helical transmembrane segment spans residues 12–34; that stretch reads YAPYITFPVAFVVGAVGYQLEWF.

Belongs to the SMIM12 family.

The protein localises to the membrane. This chain is Small integral membrane protein 12-A (smim12-a), found in Xenopus laevis (African clawed frog).